Reading from the N-terminus, the 283-residue chain is Bifunctional protein FolD (283 aa).

Residue 166 to 168 (GAS) coordinates NADP(+).

It belongs to the tetrahydrofolate dehydrogenase/cyclohydrolase family. As to quaternary structure, homodimer.

It carries out the reaction (6R)-5,10-methylene-5,6,7,8-tetrahydrofolate + NADP(+) = (6R)-5,10-methenyltetrahydrofolate + NADPH. The catalysed reaction is (6R)-5,10-methenyltetrahydrofolate + H2O = (6R)-10-formyltetrahydrofolate + H(+). The protein operates within one-carbon metabolism; tetrahydrofolate interconversion. Catalyzes the oxidation of 5,10-methylenetetrahydrofolate to 5,10-methenyltetrahydrofolate and then the hydrolysis of 5,10-methenyltetrahydrofolate to 10-formyltetrahydrofolate. This chain is Bifunctional protein FolD, found in Coxiella burnetii (strain Dugway 5J108-111).